A 73-amino-acid chain; its full sequence is MKQEIHPEYHQATARCACGNEFTVGSTKESIKVEICSQCHPFFTGKQKLVDTAGRIERFRRKYAKFEQQKSGK.

4 residues coordinate Zn(2+): C16, C18, C36, and C39.

This sequence belongs to the bacterial ribosomal protein bL31 family. Type A subfamily. In terms of assembly, part of the 50S ribosomal subunit. The cofactor is Zn(2+).

In terms of biological role, binds the 23S rRNA. This is Large ribosomal subunit protein bL31 from Desulfosudis oleivorans (strain DSM 6200 / JCM 39069 / Hxd3) (Desulfococcus oleovorans).